A 650-amino-acid chain; its full sequence is MKSSRKRTKRRVLQDMSISGLLLSVALLPSVVSAQDHVYLDPSSSGSPYLGPQIPLTGLPALTGTHEFTLRHIYQRGTHDQPDLHRRLDIKPHTRLWAVSDDGLEKELVTFDTPLVASSSPLTIQRLADRRLSVIEGYLAAARSRGEAVALSPSEWVMDTLAGPNVTDKESVLTFAKMTANDYIEEPGSGDWHYIHGRFNYSSSFGWQSDGLRGHIYADKTNSTIVISLKGTSPALFDGAGTTTNDKINDNLFFSCCCGQGGSYLWRQVCDCQQSAFTANLTCIVEAMNDENRYYRAAIDLYSNVTDMYPDANVWLTGHSLGGAMSSLLGLTFGLPVVTFEAVPEALPAARLGLPSPPGHDPRLPQSRQYTGAYHFGHTADPVYMGTCNGVGSICTWGGYAMESACHTGQMCVYDTVEDKGWRVALSTHRIEAVISDVLEVYEDIPPCAPEEECYDCELWKFFKSNGSESTTTSTTTTTTAPTTTRTSTCKTPGWWGCLDESTTTTTTTSTTTTTTTTTTSTCKTPGWFGCKDPTTTTEATAAPSVTTSIPTPTTYPTSSTSTCKDPGWFGCRDPPSTTASITSSPSTTSTCDDPGFFWGCYDESTTATHPITSGPSAPYSTPSPTHEHTCTSSIFFGLICVGSTGTELR.

Residues 1-11 lie on the Cytoplasmic side of the membrane; the sequence is MKSSRKRTKRR. The chain crosses the membrane as a helical; Signal-anchor for type II membrane protein span at residues 12–32; the sequence is VLQDMSISGLLLSVALLPSVV. The Lumenal segment spans residues 33 to 650; that stretch reads SAQDHVYLDP…CVGSTGTELR (618 aa). Asn165, Asn200, Asn222, Asn280, and Asn304 each carry an N-linked (GlcNAc...) asparagine glycan. The Charge relay system role is filled by Ser320. Asn466 is a glycosylation site (N-linked (GlcNAc...) asparagine).

The protein belongs to the AB hydrolase superfamily. Lipase family. Binds to both phosphatidylinositol (PI) and phosphatidylinositol 3,5-bisphosphate (PIP2).

Its subcellular location is the endosome. The protein localises to the multivesicular body membrane. It is found in the prevacuolar compartment membrane. It catalyses the reaction a triacylglycerol + H2O = a diacylglycerol + a fatty acid + H(+). In terms of biological role, lipase which is essential for lysis of subvacuolar cytoplasm to vacuole targeted bodies and intravacuolar autophagic bodies. Involved in the lysis of intravacuolar multivesicular body (MVB) vesicles. The intravacuolar membrane disintegration by atg15 is critical to life span extension. This Aspergillus fumigatus (strain ATCC MYA-4609 / CBS 101355 / FGSC A1100 / Af293) (Neosartorya fumigata) protein is Putative lipase atg15 (atg15).